A 1144-amino-acid polypeptide reads, in one-letter code: Probable translation initiation factor IF-2 (1144 aa).

The DOD-type homing endonuclease domain maps to 232-362 (FAGVMFGDGS…LSLLLLRFGI (131 aa)). Residues 551–768 (TTETHNFVAN…LIAGLSQKYL (218 aa)) enclose the tr-type G domain. GTP contacts are provided by residues 624-628 (DTPGH) and 678-681 (NKID).

The protein belongs to the TRAFAC class translation factor GTPase superfamily. Classic translation factor GTPase family. IF-2 subfamily. Post-translationally, this protein undergoes a protein self splicing that involves a post-translational excision of the intervening region (intein) followed by peptide ligation.

Functionally, function in general translation initiation by promoting the binding of the formylmethionine-tRNA to ribosomes. Seems to function along with eIF-2. This Thermococcus kodakarensis (strain ATCC BAA-918 / JCM 12380 / KOD1) (Pyrococcus kodakaraensis (strain KOD1)) protein is Probable translation initiation factor IF-2 (infB).